Consider the following 258-residue polypeptide: Spectinomycin 9-adenylyltransferase (258 aa).

It catalyses the reaction spectinomycin + ATP = 9-O-adenylylspectinomycin + diphosphate. In terms of biological role, mediates bacterial resistance to spectinomycin, is probably a spectinomycin 9-adenylyltransferase. The protein is Spectinomycin 9-adenylyltransferase of Campylobacter jejuni.